A 249-amino-acid chain; its full sequence is Mannose-binding protein C (249 aa).

An N-terminal signal peptide occupies residues 1-20 (MSLFTSLPFLLLTAVTASCA). The region spanning 43-101 (GINGIPGKDGRDGAKGEKGEPGQGLRGSQGPPGKMGPQGTPGIPGIPGPIGQKGDPGEN) is the Collagen-like domain. Residues 43–103 (GINGIPGKDG…QKGDPGENMG (61 aa)) form a disordered region. Pro-48 is subject to 4-hydroxyproline. The span at 50–62 (KDGRDGAKGEKGE) shows a compositional bias: basic and acidic residues. 4-hydroxyproline occurs at positions 63, 74, 83, and 86. The segment covering 79–95 (PQGTPGIPGIPGPIGQK) has biased composition (low complexity). The stretch at 113-131 (RATLQSELNQIKNWLIFSL) forms a coiled coil. Positions 135–246 (VGKKAFFTNG…CSASFLTVCE (112 aa)) constitute a C-type lectin domain. 2 disulfide bridges follow: Cys-156-Cys-245 and Cys-223-Cys-237.

As to quaternary structure, oligomeric complex of 3 or more homotrimers. Interacts with MASP1 and MASP2. Interacts with MEP1A and MEP1B and may inhibit their catalytic activity. Post-translationally, hydroxylation on proline residues within the sequence motif, GXPG, is most likely to be 4-hydroxy as this fits the requirement for 4-hydroxylation in vertebrates.

The protein localises to the secreted. Functionally, calcium-dependent lectin involved in innate immune defense. Binds mannose, fucose and N-acetylglucosamine on different microorganisms and activates the lectin complement pathway. Binds to late apoptotic cells, as well as to apoptotic blebs and to necrotic cells, but not to early apoptotic cells, facilitating their uptake by macrophages. The chain is Mannose-binding protein C (MBL) from Bos taurus (Bovine).